Reading from the N-terminus, the 519-residue chain is Putative tyrosine carboxypeptidase MATCAP2 (519 aa).

The disordered stretch occupies residues 63 to 103; the sequence is SKEEKKHRSQKRFSSASSKQHRKPSKSPSSSHSKDPSRMTA. H330 provides a ligand contact to Zn(2+). The active-site Nucleophile is E331. Residues H335 and E366 each coordinate Zn(2+).

It depends on Zn(2+) as a cofactor.

In terms of biological role, putative tyrosine carboxypeptidase. The chain is Putative tyrosine carboxypeptidase MATCAP2 from Mus musculus (Mouse).